The chain runs to 208 residues: MARYTGPVCRLCRREGMKLFLKGDRCYTGKCAIDRRAYAPGQHGQSRGKKPTEYGIQLREKQKVRRIYGVQEKQFRSYYDKANRQKGIVGENLLRLLERRLDNVVFQLGFATSRPEARQLVRHGHFTINGRRVDIPSFLVRVGDVVGVKEASKSSPRLKEILSSLDRTPPKWMNLDANAATGTIIALPDREDIQLPIQEHLIVEKYSR.

The region spanning 99-165 (RRLDNVVFQL…PRLKEILSSL (67 aa)) is the S4 RNA-binding domain.

This sequence belongs to the universal ribosomal protein uS4 family. Part of the 30S ribosomal subunit. Contacts protein S5. The interaction surface between S4 and S5 is involved in control of translational fidelity.

One of the primary rRNA binding proteins, it binds directly to 16S rRNA where it nucleates assembly of the body of the 30S subunit. Its function is as follows. With S5 and S12 plays an important role in translational accuracy. The protein is Small ribosomal subunit protein uS4 of Desulfitobacterium hafniense (strain Y51).